We begin with the raw amino-acid sequence, 1442 residues long: Cleavage and polyadenylation specificity factor subunit 1 (1442 aa).

The protein belongs to the CPSF1 family. Component of the CPSF complex, at least composed of CPSF160, CPSF100, CPSF73-I, CPSF73-II, CPSF30, FY and FIPS5. Forms a complex with cleavage and polyadenylation specificity factor (CPSF) subunits FY, CPSF30, CPSF73-I, CPSF 73-II and CPSF100.

It is found in the nucleus. CPSF plays a key role in pre-mRNA 3'-end formation, recognizing the AAUAAA signal sequence and interacting with poly(A)polymerase and other factors to bring about cleavage and poly(A) addition. This subunit is involved in the RNA recognition step of the polyadenylation reaction. The chain is Cleavage and polyadenylation specificity factor subunit 1 (CPSF160) from Arabidopsis thaliana (Mouse-ear cress).